The following is a 242-amino-acid chain: Transcription factor bHLH100 (242 aa).

The bHLH domain maps to 61–113; that stretch reads MKKLNHNASERERRKKINTMFSSLRSCLPPTNQTKKLSVSATVSQALKYIPEL.

As to quaternary structure, homodimer. In terms of tissue distribution, expressed constitutively in roots, leaves, and stems.

Its subcellular location is the nucleus. Plays a role in metal homeostasis. Confers tolerance to high zinc (Zn) and nickel (Ni). This is Transcription factor bHLH100 (BHLH100) from Arabidopsis thaliana (Mouse-ear cress).